The sequence spans 626 residues: Chaperone protein HtpG (626 aa).

The a; substrate-binding stretch occupies residues 1–339 (MSQNQETRGF…SNDLPLNVSR (339 aa)). The b stretch occupies residues 340–555 (EILQDNKITA…NDQMTTQMAK (216 aa)). The segment at 556-626 (LFAAAGQPVP…FIKRINKLLG (71 aa)) is c.

It belongs to the heat shock protein 90 family. Homodimer.

Its subcellular location is the cytoplasm. In terms of biological role, molecular chaperone. Has ATPase activity. The polypeptide is Chaperone protein HtpG (Haemophilus influenzae (strain ATCC 51907 / DSM 11121 / KW20 / Rd)).